A 248-amino-acid polypeptide reads, in one-letter code: Granzyme F (248 aa).

A signal peptide spans 1–18; it reads MPPILILLTLLLPLRAGA. A propeptide spanning residues 19 to 20 is cleaved from the precursor; sequence EE. Residues 21–246 enclose the Peptidase S1 domain; sequence IIGGHEVKPH…YLPWISRNMK (226 aa). A disulfide bridge connects residues cysteine 50 and cysteine 66. Histidine 65 functions as the Charge relay system in the catalytic mechanism. The N-linked (GlcNAc...) asparagine glycan is linked to asparagine 106. Catalysis depends on aspartate 109, which acts as the Charge relay system. 2 disulfides stabilise this stretch: cysteine 143–cysteine 210 and cysteine 175–cysteine 189. N-linked (GlcNAc...) asparagine glycosylation is present at asparagine 154. Serine 204 acts as the Charge relay system in catalysis. N-linked (GlcNAc...) asparagine glycosylation occurs at asparagine 223.

This sequence belongs to the peptidase S1 family. Granzyme subfamily.

The protein localises to the cytolytic granule. In terms of biological role, this enzyme is probably necessary for target cell lysis in cell-mediated immune responses. This is Granzyme F (Gzmf) from Mus musculus (Mouse).